Reading from the N-terminus, the 429-residue chain is Phosphoribosylamine--glycine ligase (429 aa).

An ATP-grasp domain is found at 108–315 (KDFLARHRIP…LVLLVEAALA (208 aa)). Residue 134 to 195 (LHEQGAPIVI…EEFLDGEEAS (62 aa)) participates in ATP binding. Mg(2+) is bound by residues E285 and N287.

This sequence belongs to the GARS family. Mg(2+) is required as a cofactor. Mn(2+) serves as cofactor.

It catalyses the reaction 5-phospho-beta-D-ribosylamine + glycine + ATP = N(1)-(5-phospho-beta-D-ribosyl)glycinamide + ADP + phosphate + H(+). Its pathway is purine metabolism; IMP biosynthesis via de novo pathway; N(1)-(5-phospho-D-ribosyl)glycinamide from 5-phospho-alpha-D-ribose 1-diphosphate: step 2/2. The protein is Phosphoribosylamine--glycine ligase of Pseudomonas aeruginosa (strain ATCC 15692 / DSM 22644 / CIP 104116 / JCM 14847 / LMG 12228 / 1C / PRS 101 / PAO1).